The following is a 182-amino-acid chain: Plasmolipin (182 aa).

The Cytoplasmic portion of the chain corresponds to 1–35; sequence MAEFPSKVSTRTSSPAQGVGASVSALRPDLGFVRS. Ser-9 is subject to Phosphoserine. In terms of domain architecture, MARVEL spans 32 to 166; it reads FVRSALGVLA…SAFFSFQAWR (135 aa). The chain crosses the membrane as a helical span at residues 36–56; the sequence is ALGVLALLQLALGLLVWALIA. At 57–68 the chain is on the extracellular side; the sequence is DTPYHLYPAYGW. The helical transmembrane segment at 69–89 threads the bilayer; it reads VMFVAVFLWLVTIVFFIIYLF. Residues 90–99 are Cytoplasmic-facing; it reads QLHMKLYMVP. Residues 100–120 traverse the membrane as a helical segment; sequence WPLVLLIFFVAATVLYITAFI. Residues 121 to 141 are Extracellular-facing; it reads ACAAAVDLTSLRGSRPYNQRS. The helical transmembrane segment at 142–162 threads the bilayer; it reads AASFFACLVMIAYGVSAFFSF. Over 163-182 the chain is Cytoplasmic; the sequence is QAWRGVGSNAATSQMAGGYS.

The protein belongs to the MAL family. As to quaternary structure, forms oligomers. Phosphorylated.

The protein resides in the membrane. It is found in the cell membrane. Its subcellular location is the myelin membrane. It localises to the apical cell membrane. Its function is as follows. Main component of the myelin sheath that plays an important role in myelin membrane biogenesis and myelination. Plays an essential function in apical endocytosis. Regulates epithelial development through the regulation of apical endocytosis. Part of the intracellular machinery that mediates basolateral-to-apical transport of ICAM-1, an essential adhesion receptor in epithelial cells, from the subapical compartment in hepatic epithelial cells. The polypeptide is Plasmolipin (Pllp) (Mus musculus (Mouse)).